The chain runs to 100 residues: Urease subunit gamma (100 aa).

The protein belongs to the urease gamma subunit family. In terms of assembly, heterotrimer of UreA (gamma), UreB (beta) and UreC (alpha) subunits. Three heterotrimers associate to form the active enzyme.

The protein localises to the cytoplasm. It carries out the reaction urea + 2 H2O + H(+) = hydrogencarbonate + 2 NH4(+). Its pathway is nitrogen metabolism; urea degradation; CO(2) and NH(3) from urea (urease route): step 1/1. This is Urease subunit gamma from Paenarthrobacter aurescens (strain TC1).